A 769-amino-acid polypeptide reads, in one-letter code: Endonuclease MutS2 (769 aa).

ATP is bound at residue 335–342; that stretch reads GGNAGGKT. Residues 694–769 enclose the Smr domain; it reads IDLRGKRADV…GDGMTEVELV (76 aa).

It belongs to the DNA mismatch repair MutS family. MutS2 subfamily. As to quaternary structure, homodimer. Binds to stalled ribosomes, contacting rRNA.

In terms of biological role, endonuclease that is involved in the suppression of homologous recombination and thus may have a key role in the control of bacterial genetic diversity. Acts as a ribosome collision sensor, splitting the ribosome into its 2 subunits. Detects stalled/collided 70S ribosomes which it binds and splits by an ATP-hydrolysis driven conformational change. Acts upstream of the ribosome quality control system (RQC), a ribosome-associated complex that mediates the extraction of incompletely synthesized nascent chains from stalled ribosomes and their subsequent degradation. Probably generates substrates for RQC. The polypeptide is Endonuclease MutS2 (Maridesulfovibrio salexigens (strain ATCC 14822 / DSM 2638 / NCIMB 8403 / VKM B-1763) (Desulfovibrio salexigens)).